The sequence spans 420 residues: Serine hydroxymethyltransferase (420 aa).

(6S)-5,6,7,8-tetrahydrofolate is bound by residues leucine 123 and glycine 127–leucine 129. Lysine 232 is modified (N6-(pyridoxal phosphate)lysine). A (6S)-5,6,7,8-tetrahydrofolate-binding site is contributed by serine 357 to phenylalanine 359.

Belongs to the SHMT family. As to quaternary structure, homodimer. Pyridoxal 5'-phosphate is required as a cofactor.

It is found in the cytoplasm. The catalysed reaction is (6R)-5,10-methylene-5,6,7,8-tetrahydrofolate + glycine + H2O = (6S)-5,6,7,8-tetrahydrofolate + L-serine. The protein operates within one-carbon metabolism; tetrahydrofolate interconversion. Its pathway is amino-acid biosynthesis; glycine biosynthesis; glycine from L-serine: step 1/1. In terms of biological role, catalyzes the reversible interconversion of serine and glycine with tetrahydrofolate (THF) serving as the one-carbon carrier. This reaction serves as the major source of one-carbon groups required for the biosynthesis of purines, thymidylate, methionine, and other important biomolecules. Also exhibits THF-independent aldolase activity toward beta-hydroxyamino acids, producing glycine and aldehydes, via a retro-aldol mechanism. The chain is Serine hydroxymethyltransferase from Streptococcus pyogenes serotype M2 (strain MGAS10270).